The sequence spans 149 residues: ER export of PMA1 protein 1 (149 aa).

Residues 1–6 (MNLYGY) lie on the Lumenal side of the membrane. Residues 7–27 (FLLLIIVIAFIALLPLFSGIG) form a helical; Signal-anchor for type II membrane protein membrane-spanning segment. Residues 28-149 (TFKLTKPKSS…KKNEAYEGFV (122 aa)) lie on the Cytoplasmic side of the membrane.

As to quaternary structure, interacts with PMA1 and PSG1.

It localises to the endoplasmic reticulum membrane. Its subcellular location is the cytoplasmic vesicle. It is found in the COPI-coated vesicle membrane. The protein localises to the COPII-coated vesicle membrane. The protein resides in the golgi apparatus membrane. Its function is as follows. Specific cargo receptor protein for the plasma membrane ATPase PMA1 that acts with PSG1 to promote the transport and maturation of PMA1. EXP1 and PSG1 probably act sequentially to promote PMA1 sorting between the ER and the Golgi, with EXP1 promoting PMA1 export from the ER to the Golgi while PSG1 has a role in PMA1 maturation or quality control in the Golgi. This is ER export of PMA1 protein 1 from Saccharomyces cerevisiae (strain ATCC 204508 / S288c) (Baker's yeast).